Consider the following 226-residue polypeptide: Lipoprotein-releasing system ATP-binding protein LolD (226 aa).

The 221-residue stretch at 5–225 folds into the ABC transporter domain; it reads FALSNISKFF…EINSCMLSSV (221 aa). Residue 40-47 participates in ATP binding; sequence GRSGSGKS.

It belongs to the ABC transporter superfamily. Lipoprotein translocase (TC 3.A.1.125) family. As to quaternary structure, the complex is composed of two ATP-binding proteins (LolD) and two transmembrane proteins (LolC and LolE).

It localises to the cell inner membrane. In terms of biological role, part of the ABC transporter complex LolCDE involved in the translocation of mature outer membrane-directed lipoproteins, from the inner membrane to the periplasmic chaperone, LolA. Responsible for the formation of the LolA-lipoprotein complex in an ATP-dependent manner. This Ehrlichia canis (strain Jake) protein is Lipoprotein-releasing system ATP-binding protein LolD.